Consider the following 362-residue polypeptide: Mitochondrial glycine transporter (362 aa).

3 Solcar repeats span residues 22–108, 132–236, and 269–354; these read PDAT…MRTS, LTAM…FKND, and RSSI…LIKS. A run of 6 helical transmembrane segments spans residues 28 to 53, 83 to 109, 138 to 163, 211 to 234, 273 to 299, and 329 to 347; these read LLAG…TRLQ, GTLP…RTSW, LTTG…TRFE, GSVA…EAFK, INST…KTRL, and GLSL…SWCI.

This sequence belongs to the mitochondrial carrier (TC 2.A.29) family. SLC25A38 subfamily.

It is found in the mitochondrion inner membrane. It carries out the reaction glycine(in) = glycine(out). Mitochondrial glycine transporter that imports glycine into the mitochondrial matrix. Plays an important role in providing glycine for the first enzymatic step in heme biosynthesis, the condensation of glycine with succinyl-CoA to produce 5-aminolevulinate (ALA) in the mitochondrial matrix. The protein is Mitochondrial glycine transporter of Candida albicans (strain SC5314 / ATCC MYA-2876) (Yeast).